A 415-amino-acid chain; its full sequence is Gamma-glutamyl phosphate reductase (415 aa).

Belongs to the gamma-glutamyl phosphate reductase family.

It localises to the cytoplasm. It catalyses the reaction L-glutamate 5-semialdehyde + phosphate + NADP(+) = L-glutamyl 5-phosphate + NADPH + H(+). It participates in amino-acid biosynthesis; L-proline biosynthesis; L-glutamate 5-semialdehyde from L-glutamate: step 2/2. Catalyzes the NADPH-dependent reduction of L-glutamate 5-phosphate into L-glutamate 5-semialdehyde and phosphate. The product spontaneously undergoes cyclization to form 1-pyrroline-5-carboxylate. In Bacillus velezensis (strain DSM 23117 / BGSC 10A6 / LMG 26770 / FZB42) (Bacillus amyloliquefaciens subsp. plantarum), this protein is Gamma-glutamyl phosphate reductase.